Consider the following 241-residue polypeptide: Triosephosphate isomerase (241 aa).

Position 9–11 (9–11 (NWK)) interacts with substrate. The active-site Electrophile is the His96. Glu165 acts as the Proton acceptor in catalysis. Substrate-binding positions include Gly171, Ser204, and 225–226 (GG).

Belongs to the triosephosphate isomerase family. Homodimer.

It is found in the cytoplasm. It carries out the reaction D-glyceraldehyde 3-phosphate = dihydroxyacetone phosphate. It participates in carbohydrate biosynthesis; gluconeogenesis. It functions in the pathway carbohydrate degradation; glycolysis; D-glyceraldehyde 3-phosphate from glycerone phosphate: step 1/1. Involved in the gluconeogenesis. Catalyzes stereospecifically the conversion of dihydroxyacetone phosphate (DHAP) to D-glyceraldehyde-3-phosphate (G3P). The chain is Triosephosphate isomerase from Picosynechococcus sp. (strain ATCC 27264 / PCC 7002 / PR-6) (Agmenellum quadruplicatum).